Here is a 169-residue protein sequence, read N- to C-terminus: Zinc metalloproteinase-disintegrin-like mikarin (169 aa).

The Peptidase M12B domain maps to 14–57; the sequence is KYLEYVVVDNNMYRNYGNAGPCVMSAEISFEPLQEFSSCDIQEP. In terms of domain architecture, Disintegrin spans 65–129; that stretch reads PAVCGNYYVE…PEICTGRSAK (65 aa). 6 disulfide bridges follow: Cys68/Cys97, Cys79/Cys92, Cys81/Cys87, Cys105/Cys111, Cys110/Cys123, and Cys150/Cys161. The D/ECD-tripeptide motif lies at 116–118; that stretch reads DCD.

This sequence belongs to the venom metalloproteinase (M12B) family. P-III subfamily. P-IIIa sub-subfamily. In terms of assembly, monomer. The cofactor is Zn(2+). Expressed by the venom gland.

It localises to the secreted. Inhibited by EDTA, but not by PMSF. In terms of biological role, snake venom zinc metalloproteinase that calcium-independently catalyzes the conversion of prothrombin (F2) to alpha-thrombin through the formation of a thrombin intermediate. The chain is Zinc metalloproteinase-disintegrin-like mikarin from Micropechis ikaheca (New Guinean small-eyed snake).